We begin with the raw amino-acid sequence, 128 residues long: Large ribosomal subunit protein bL12 (128 aa).

Belongs to the bacterial ribosomal protein bL12 family. Homodimer. Part of the ribosomal stalk of the 50S ribosomal subunit. Forms a multimeric L10(L12)X complex, where L10 forms an elongated spine to which 2 to 4 L12 dimers bind in a sequential fashion. Binds GTP-bound translation factors.

Its function is as follows. Forms part of the ribosomal stalk which helps the ribosome interact with GTP-bound translation factors. Is thus essential for accurate translation. The polypeptide is Large ribosomal subunit protein bL12 (Synechococcus sp. (strain ATCC 27144 / PCC 6301 / SAUG 1402/1) (Anacystis nidulans)).